A 408-amino-acid chain; its full sequence is GDSL esterase/lipase At1g54790 (408 aa).

The signal sequence occupies residues 1-24; sequence MNITKMKLFYVILFFISSLQISNS. The Nucleophile role is filled by Ser-38. N-linked (GlcNAc...) asparagine glycans are attached at residues Asn-273, Asn-289, and Asn-361. Catalysis depends on residues Asp-370 and His-373.

This sequence belongs to the 'GDSL' lipolytic enzyme family.

The protein localises to the secreted. In Arabidopsis thaliana (Mouse-ear cress), this protein is GDSL esterase/lipase At1g54790.